The primary structure comprises 332 residues: Probable xyloglucan endotransglucosylase/hydrolase protein 28 (332 aa).

A signal peptide spans Met-1–Ala-22. The region spanning Leu-23–Phe-223 is the GH16 domain. The active-site Nucleophile is the Glu-108. Glu-112 (proton donor) is an active-site residue. Residues Glu-112 and Gln-125–Asn-127 each bind xyloglucan. Asn-131 carries an N-linked (GlcNAc...) asparagine glycan. Xyloglucan contacts are provided by residues His-135 to Glu-139, Lys-202 to Trp-203, Gly-207, and Arg-282. A disulfide bridge links Cys-277 with Cys-290. Basic residues predominate over residues His-313–Leu-326. A disordered region spans residues His-313–Ile-332.

The protein belongs to the glycosyl hydrolase 16 family. XTH group 3 subfamily. In terms of processing, contains at least one intrachain disulfide bond essential for its enzymatic activity. As to expression, expressed in 7 day old seedlings, roots, rosette leaves, internodes between nodes bearing axillary shoots, nodes bearing flowers, flower buds and siliques.

It is found in the secreted. Its subcellular location is the cell wall. The protein resides in the extracellular space. It localises to the apoplast. It catalyses the reaction breaks a beta-(1-&gt;4) bond in the backbone of a xyloglucan and transfers the xyloglucanyl segment on to O-4 of the non-reducing terminal glucose residue of an acceptor, which can be a xyloglucan or an oligosaccharide of xyloglucan.. Catalyzes xyloglucan endohydrolysis (XEH) and/or endotransglycosylation (XET). Cleaves and religates xyloglucan polymers, an essential constituent of the primary cell wall, and thereby participates in cell wall construction of growing tissues. This is Probable xyloglucan endotransglucosylase/hydrolase protein 28 (XTH28) from Arabidopsis thaliana (Mouse-ear cress).